The following is a 276-amino-acid chain: Large ribosomal subunit protein uL2 (276 aa).

Residues 223–276 are disordered; it reads GAAMNPVDHPHGGGEGRAPRGRPPASPWGWQTKGLKTRKRRKPSSRFIIARRKK. Over residues 230-240 the composition is skewed to basic and acidic residues; the sequence is DHPHGGGEGRA. Positions 257-276 are enriched in basic residues; it reads LKTRKRRKPSSRFIIARRKK.

This sequence belongs to the universal ribosomal protein uL2 family. As to quaternary structure, part of the 50S ribosomal subunit. Forms a bridge to the 30S subunit in the 70S ribosome.

In terms of biological role, one of the primary rRNA binding proteins. Required for association of the 30S and 50S subunits to form the 70S ribosome, for tRNA binding and peptide bond formation. It has been suggested to have peptidyltransferase activity; this is somewhat controversial. Makes several contacts with the 16S rRNA in the 70S ribosome. The polypeptide is Large ribosomal subunit protein uL2 (Thermus thermophilus (strain ATCC BAA-163 / DSM 7039 / HB27)).